The primary structure comprises 317 residues: Olfactory receptor 2T27 (317 aa).

The Extracellular segment spans residues 1–22 (MEQSNYSVYADFILLGLFSNAR). Asn-5 carries N-linked (GlcNAc...) asparagine glycosylation. Residues 23–43 (FPWLLFALILLVFLTSIASNV) form a helical membrane-spanning segment. The Cytoplasmic segment spans residues 44–60 (VKIILIHIDSRLHTPMY). A helical membrane pass occupies residues 61-83 (FLLSQLSLRDILYISTIVPKMLV). Residues 84-97 (DQVMSQRAISFAGC) lie on the Extracellular side of the membrane. A disulfide bridge connects residues Cys-97 and Cys-189. Residues 98 to 118 (TAQHFLYLTLAGAEFFLLGLM) traverse the membrane as a helical segment. Residues 119 to 139 (SYDRYVAICNPLHYPVLMSRK) lie on the Cytoplasmic side of the membrane. The chain crosses the membrane as a helical span at residues 140–160 (ICWLIVAAAWLGGSIDGFLLT). Residues 161 to 197 (PVTMQFPFCASREINHFFCEVPALLKLSCTDTSAYET) lie on the Extracellular side of the membrane. The chain crosses the membrane as a helical span at residues 198-218 (AMYVCCIMMLLIPFSVISGSY). Topologically, residues 219-244 (TRILITVYRMSEAEGRGKAVATCSSH) are cytoplasmic. The chain crosses the membrane as a helical span at residues 245-265 (MVVVSLFYGAAMYTYVLPHSY). The Extracellular segment spans residues 266–271 (HTPEQD). A helical transmembrane segment spans residues 272–292 (KAVSAFYTILTPMLNPLIYSL). The Cytoplasmic segment spans residues 293 to 317 (RNKDVTGALQKVVGRCVSSGKVTTF).

This sequence belongs to the G-protein coupled receptor 1 family.

It is found in the cell membrane. In terms of biological role, odorant receptor. This Homo sapiens (Human) protein is Olfactory receptor 2T27 (OR2T27).